We begin with the raw amino-acid sequence, 639 residues long: Chaperone protein DnaK (639 aa).

Residue Thr-198 is modified to Phosphothreonine; by autocatalysis. A disordered region spans residues 597–639 (AYSAGQSAEGAPHAAGAEASAQSRTDDGVVDADFEEVDEKKGH). Residues 603 to 617 (SAEGAPHAAGAEASA) are compositionally biased toward low complexity. Acidic residues predominate over residues 624 to 633 (GVVDADFEEV).

It belongs to the heat shock protein 70 family.

Functionally, acts as a chaperone. The sequence is that of Chaperone protein DnaK from Rhodospirillum rubrum (strain ATCC 11170 / ATH 1.1.1 / DSM 467 / LMG 4362 / NCIMB 8255 / S1).